Consider the following 235-residue polypeptide: Putative N-acetylmannosamine-6-phosphate 2-epimerase (235 aa).

The protein belongs to the NanE family.

It catalyses the reaction an N-acyl-D-glucosamine 6-phosphate = an N-acyl-D-mannosamine 6-phosphate. Its pathway is amino-sugar metabolism; N-acetylneuraminate degradation; D-fructose 6-phosphate from N-acetylneuraminate: step 3/5. Functionally, converts N-acetylmannosamine-6-phosphate (ManNAc-6-P) to N-acetylglucosamine-6-phosphate (GlcNAc-6-P). The polypeptide is Putative N-acetylmannosamine-6-phosphate 2-epimerase (Aliivibrio fischeri (strain ATCC 700601 / ES114) (Vibrio fischeri)).